The primary structure comprises 448 residues: Nicotinate phosphoribosyltransferase pncB1 (448 aa).

The tract at residues 1–21 is disordered; the sequence is MGPPPAARRREGEPDNQDPAG. Histidine 212 bears the Phosphohistidine mark. The interval 353 to 372 is disordered; the sequence is RSSYKESPGGRKEALRRSRA.

Belongs to the NAPRTase family. In terms of processing, transiently phosphorylated on a His residue during the reaction cycle. Phosphorylation strongly increases the affinity for substrates and increases the rate of nicotinate D-ribonucleotide production. Dephosphorylation regenerates the low-affinity form of the enzyme, leading to product release.

It carries out the reaction nicotinate + 5-phospho-alpha-D-ribose 1-diphosphate + ATP + H2O = nicotinate beta-D-ribonucleotide + ADP + phosphate + diphosphate. It functions in the pathway cofactor biosynthesis; NAD(+) biosynthesis; nicotinate D-ribonucleotide from nicotinate: step 1/1. In terms of biological role, involved in the Preiss-Handler pathway, which is a recycling route that permits the salvage of free nicotinamide (NM) and nicotinic acid (Na) involved in the NAD biosynthesis. Catalyzes the synthesis of beta-nicotinate D-ribonucleotide from nicotinate and 5-phospho-D-ribose 1-phosphate at the expense of ATP. It is not able to use nicotinamide. PncB1 contributes to basal NAD level. The protein is Nicotinate phosphoribosyltransferase pncB1 (pncB1) of Mycobacterium tuberculosis (strain ATCC 25618 / H37Rv).